A 155-amino-acid polypeptide reads, in one-letter code: DNA gyrase inhibitor (155 aa).

The protein belongs to the DNA gyrase inhibitor family. In terms of assembly, interacts with DNA gyrase.

The protein localises to the cytoplasm. Its function is as follows. Inhibits the supercoiling activity of DNA gyrase. Acts by inhibiting DNA gyrase at an early step, prior to (or at the step of) binding of DNA by the gyrase. It protects cells against toxins that target DNA gyrase, by inhibiting activity of these toxins and reducing the formation of lethal double-strand breaks in the cell. The protein is DNA gyrase inhibitor of Escherichia fergusonii (strain ATCC 35469 / DSM 13698 / CCUG 18766 / IAM 14443 / JCM 21226 / LMG 7866 / NBRC 102419 / NCTC 12128 / CDC 0568-73).